We begin with the raw amino-acid sequence, 350 residues long: S-adenosylmethionine:tRNA ribosyltransferase-isomerase (350 aa).

This sequence belongs to the QueA family. As to quaternary structure, monomer.

It is found in the cytoplasm. The catalysed reaction is 7-aminomethyl-7-carbaguanosine(34) in tRNA + S-adenosyl-L-methionine = epoxyqueuosine(34) in tRNA + adenine + L-methionine + 2 H(+). It participates in tRNA modification; tRNA-queuosine biosynthesis. Transfers and isomerizes the ribose moiety from AdoMet to the 7-aminomethyl group of 7-deazaguanine (preQ1-tRNA) to give epoxyqueuosine (oQ-tRNA). This Bacillus cereus (strain G9842) protein is S-adenosylmethionine:tRNA ribosyltransferase-isomerase.